The chain runs to 503 residues: Probable cytosol aminopeptidase (503 aa).

Mn(2+)-binding residues include Lys-274 and Asp-279. The active site involves Lys-286. Asp-297, Asp-356, and Glu-358 together coordinate Mn(2+). Arg-360 is an active-site residue.

This sequence belongs to the peptidase M17 family. It depends on Mn(2+) as a cofactor.

The protein resides in the cytoplasm. The catalysed reaction is Release of an N-terminal amino acid, Xaa-|-Yaa-, in which Xaa is preferably Leu, but may be other amino acids including Pro although not Arg or Lys, and Yaa may be Pro. Amino acid amides and methyl esters are also readily hydrolyzed, but rates on arylamides are exceedingly low.. It catalyses the reaction Release of an N-terminal amino acid, preferentially leucine, but not glutamic or aspartic acids.. Presumably involved in the processing and regular turnover of intracellular proteins. Catalyzes the removal of unsubstituted N-terminal amino acids from various peptides. This chain is Probable cytosol aminopeptidase, found in Burkholderia orbicola (strain AU 1054).